Reading from the N-terminus, the 538-residue chain is MAVAAKNIPAPDLVPVRRALLSVFDKTGLIDFARALAAAGVELVSTGGTAKAIAEAGLAVRDVSELTGFPEIMDGRVKTLHPSVHGALLGVRDDPEHAAAMRKYGIEPIDLLVSNLYPFEEVRRSGADYAAIVENIDIGGPAMIRASAKNHAYVAIVTDPGDYASVLNALEMNIGSLSLDFRKKLAAKAFARTATYDAAISGWFAEALEIEHPTWRAFGGRLTEVMRYGENPHQSAGFYVNGDKRPGVATARQLQGKQLSYNNINDTDAAFELAGEFDPSRSAAVAIIKHANPCGVAEGTSLKSAYAKALACDPVSAFGGIVAVNRTLDAEAAEDIVKTFTEVIIAPDATDEAAAIVAAKKNLRLLVTGGLPDPRSPGTTVKSVAGGLLVQGRDNAVVDDLELKVVTKRAPTPAEMADLKFAFRVAKHVKSNAIVYAKDGATVGIGAGQMSRVDSSRIAARKALDAAEAAGMTEPLTTGSVVASDAFFPFADGLLAAVAAGATAVIQPGGSMNDKDVIAAADEHGIAMVFTGVRHFRH.

Positions 8–158 constitute an MGS-like domain; the sequence is IPAPDLVPVR…KNHAYVAIVT (151 aa).

This sequence belongs to the PurH family.

It catalyses the reaction (6R)-10-formyltetrahydrofolate + 5-amino-1-(5-phospho-beta-D-ribosyl)imidazole-4-carboxamide = 5-formamido-1-(5-phospho-D-ribosyl)imidazole-4-carboxamide + (6S)-5,6,7,8-tetrahydrofolate. It carries out the reaction IMP + H2O = 5-formamido-1-(5-phospho-D-ribosyl)imidazole-4-carboxamide. The protein operates within purine metabolism; IMP biosynthesis via de novo pathway; 5-formamido-1-(5-phospho-D-ribosyl)imidazole-4-carboxamide from 5-amino-1-(5-phospho-D-ribosyl)imidazole-4-carboxamide (10-formyl THF route): step 1/1. Its pathway is purine metabolism; IMP biosynthesis via de novo pathway; IMP from 5-formamido-1-(5-phospho-D-ribosyl)imidazole-4-carboxamide: step 1/1. This is Bifunctional purine biosynthesis protein PurH from Mesorhizobium japonicum (strain LMG 29417 / CECT 9101 / MAFF 303099) (Mesorhizobium loti (strain MAFF 303099)).